A 288-amino-acid chain; its full sequence is Store-operated calcium entry regulator STIMATE (288 aa).

The Cytoplasmic portion of the chain corresponds to 1–28 (MQGPGGNVSRGLPGGPASTVASGAGRCE). Transmembrane regions (helical) follow at residues 29-49 (SGAL…VVAF), 69-89 (IWFL…FANV), and 102-122 (LYLI…YVGV). A GXXXG motif motif is present at residues 149-153 (GAWVG). 2 helical membrane-spanning segments follow: residues 156-176 (ALYI…LLIL) and 194-214 (LAIV…WVVD). The Cytoplasmic portion of the chain corresponds to 215–288 (NFLMRKGKTK…KKKHRFGLPV (74 aa)). A disordered region spans residues 228 to 288 (EERGANQDSR…KKKHRFGLPV (61 aa)). Residues 241-246 (KVRYRR) are required for localization in the endoplasmic reticulum. The segment covering 261-272 (ADDEMEESDAEE) has biased composition (acidic residues). Residues 277–288 (PVKKKHRFGLPV) are compositionally biased toward basic residues.

The protein belongs to the STIMATE family. In terms of assembly, homooligomer. Interacts with STIM1.

The protein localises to the endoplasmic reticulum membrane. In terms of biological role, acts as a regulator of store-operated Ca(2+) entry (SOCE) at junctional sites that connect the endoplasmic reticulum (ER) and plasma membrane (PM), called ER-plasma membrane (ER-PM) junction or cortical ER. SOCE is a Ca(2+) influx following depletion of intracellular Ca(2+) stores. Acts by interacting with STIM1, promoting STIM1 conformational switch. Involved in STIM1 relocalization to ER-PM junctions. Contributes to the maintenance and reorganization of store-dependent ER-PM junctions. This is Store-operated calcium entry regulator STIMATE from Rattus norvegicus (Rat).